The following is a 614-amino-acid chain: UvrABC system protein C (614 aa).

Residues 26–104 (NLPGVYKMLG…IKEHRPPYNV (79 aa)) enclose the GIY-YIG domain. Residues 215-250 (SDIHTTLIEKMEHSAEALDFEKAAFYRDQLSMLREV) form the UVR domain.

This sequence belongs to the UvrC family. Interacts with UvrB in an incision complex.

The protein resides in the cytoplasm. In terms of biological role, the UvrABC repair system catalyzes the recognition and processing of DNA lesions. UvrC both incises the 5' and 3' sides of the lesion. The N-terminal half is responsible for the 3' incision and the C-terminal half is responsible for the 5' incision. The chain is UvrABC system protein C from Psychrobacter sp. (strain PRwf-1).